A 306-amino-acid polypeptide reads, in one-letter code: tRNA dimethylallyltransferase (306 aa).

Residue 11-18 participates in ATP binding; sequence GPTAVGKS. A substrate-binding site is contributed by 13–18; the sequence is TAVGKS. An interaction with substrate tRNA region spans residues 35–38; sequence DSIQ.

It belongs to the IPP transferase family. As to quaternary structure, monomer. Requires Mg(2+) as cofactor.

It carries out the reaction adenosine(37) in tRNA + dimethylallyl diphosphate = N(6)-dimethylallyladenosine(37) in tRNA + diphosphate. Its function is as follows. Catalyzes the transfer of a dimethylallyl group onto the adenine at position 37 in tRNAs that read codons beginning with uridine, leading to the formation of N6-(dimethylallyl)adenosine (i(6)A). This Borreliella burgdorferi (strain ZS7) (Borrelia burgdorferi) protein is tRNA dimethylallyltransferase.